The chain runs to 805 residues: Ubiquitin carboxyl-terminal hydrolase 5 (805 aa).

In terms of domain architecture, Rhodanese spans 159-283; it reads HGDALLLIDV…WVKLGGAYQS (125 aa). Residues 359–380 are disordered; it reads RNSPTVQKFSPHPPTTLSKLNT. The 359-residue stretch at 446–804 folds into the USP domain; the sequence is VGLENIGNCC…SAYVLFYERI (359 aa). The Nucleophile role is filled by Cys-455. His-761 functions as the Proton acceptor in the catalytic mechanism.

This sequence belongs to the peptidase C19 family.

It catalyses the reaction Thiol-dependent hydrolysis of ester, thioester, amide, peptide and isopeptide bonds formed by the C-terminal Gly of ubiquitin (a 76-residue protein attached to proteins as an intracellular targeting signal).. The polypeptide is Ubiquitin carboxyl-terminal hydrolase 5 (UBP5) (Saccharomyces cerevisiae (strain ATCC 204508 / S288c) (Baker's yeast)).